Reading from the N-terminus, the 155-residue chain is DNA gyrase inhibitor (155 aa).

It belongs to the DNA gyrase inhibitor family. As to quaternary structure, interacts with DNA gyrase.

Its subcellular location is the cytoplasm. Its function is as follows. Inhibits the supercoiling activity of DNA gyrase. Acts by inhibiting DNA gyrase at an early step, prior to (or at the step of) binding of DNA by the gyrase. It protects cells against toxins that target DNA gyrase, by inhibiting activity of these toxins and reducing the formation of lethal double-strand breaks in the cell. This Escherichia fergusonii (strain ATCC 35469 / DSM 13698 / CCUG 18766 / IAM 14443 / JCM 21226 / LMG 7866 / NBRC 102419 / NCTC 12128 / CDC 0568-73) protein is DNA gyrase inhibitor.